Reading from the N-terminus, the 206-residue chain is Two-component response regulator ORR7 (206 aa).

Residues 53–92 (VVPLHDNASAEDDDDDEEDDDEDDDDDDDEDDEEEAAPPY) form a disordered region. The span at 61-88 (SAEDDDDDEEDDDEDDDDDDDEDDEEEA) shows a compositional bias: acidic residues. Residues 92–205 (YVMAVDDSSV…DISRITSRML (114 aa)) form the Response regulatory domain. The residue at position 138 (D138) is a 4-aspartylphosphate.

The protein belongs to the ARR family. Type-A subfamily. Post-translationally, two-component system major event consists of a His-to-Asp phosphorelay between a sensor histidine kinase (HK) and a response regulator (RR). In plants, the His-to-Asp phosphorelay involves an additional intermediate named Histidine-containing phosphotransfer protein (HPt). This multistep phosphorelay consists of a His-Asp-His-Asp sequential transfer of a phosphate group between first a His and an Asp of the HK protein, followed by the transfer to a conserved His of the HPt protein and finally the transfer to an Asp in the receiver domain of the RR protein. As to expression, expressed in flowers, and at low levels in roots, mature leaves and shoots.

In terms of biological role, functions as a response regulator involved in His-to-Asp phosphorelay signal transduction system. Phosphorylation of the Asp residue in the receiver domain activates the ability of the protein to promote the transcription of target genes. Type-A response regulators seem to act as negative regulators of the cytokinin signaling. The protein is Two-component response regulator ORR7 of Oryza sativa subsp. indica (Rice).